The sequence spans 396 residues: NADH-quinone oxidoreductase subunit D (396 aa).

This sequence belongs to the complex I 49 kDa subunit family. In terms of assembly, NDH-1 is composed of 14 different subunits. Subunits NuoB, C, D, E, F, and G constitute the peripheral sector of the complex.

The protein localises to the cell inner membrane. It catalyses the reaction a quinone + NADH + 5 H(+)(in) = a quinol + NAD(+) + 4 H(+)(out). Its function is as follows. NDH-1 shuttles electrons from NADH, via FMN and iron-sulfur (Fe-S) centers, to quinones in the respiratory chain. The immediate electron acceptor for the enzyme in this species is believed to be ubiquinone. Couples the redox reaction to proton translocation (for every two electrons transferred, four hydrogen ions are translocated across the cytoplasmic membrane), and thus conserves the redox energy in a proton gradient. This is NADH-quinone oxidoreductase subunit D from Orientia tsutsugamushi (strain Boryong) (Rickettsia tsutsugamushi).